The sequence spans 84 residues: MAKQIKRKRRPQIKINTFCRFTAAGVTKIDYKDIDILLKNIDESGKITPSRMTGTSAKFQRKLTTAIKRARFLALIPYTDKHKK.

This sequence belongs to the bacterial ribosomal protein bS18 family. Part of the 30S ribosomal subunit. Forms a tight heterodimer with protein bS6.

Functionally, binds as a heterodimer with protein bS6 to the central domain of the 16S rRNA, where it helps stabilize the platform of the 30S subunit. The chain is Small ribosomal subunit protein bS18 from Vesicomyosocius okutanii subsp. Calyptogena okutanii (strain HA).